We begin with the raw amino-acid sequence, 219 residues long: Glucagon-2 (219 aa).

Positions 1–20 (MKSTCYMIGILLLILQNTYQ) are cleaved as a signal peptide. 5 propeptides span residues 21 to 50 (SPVPEADGSSRSVKAARNEAVDDSEQLKEV), 84 to 95 (SGGLSRRNADYE), 136 to 140 (NAEIE), 175 to 178 (IRYS), and 213 to 219 (KDLLEEH). The disordered stretch occupies residues 23–43 (VPEADGSSRSVKAARNEAVDD).

Belongs to the glucagon family.

The protein resides in the secreted. In terms of biological role, promotes hydrolysis of glycogen and lipids, and raises the blood sugar level. This is Glucagon-2 (gcg2) from Xenopus laevis (African clawed frog).